A 446-amino-acid polypeptide reads, in one-letter code: MITIKKGLDLPIAGTPSQVINDGKTIKKVALLGEEYVGMRPTMHVRVGDEVKKAQVLFEDKKNPGVKFTAPAAGKVIEVNRGAKRVLQSVVIEVAGEEQVTFDKFEAAQLSGLDREVIKTQLVDSGLWTALRTRPFSKVPAIESSTKAIFVTAMDTNPLAAKPELIINEQQEAFIAGLDILSALTEGKVYVCKSGTSLPRSSQSNVEEHVFDGPHPAGLAGTHMHFLYPVNAENVAWSINYQDVIAFGKLFLTGELYTDRVVSLAGPVVNNPRLVRTVIGASLDDLTDNELMPGEVRVISGSVLTGTHATGPHAYLGRYHQQVSVLREGREKELFGWAMPGKNKFSVTRSFLGHVFKGQLFNMTTTTNGSDRSMVPIGNYERVMPLDMEPTLLLRDLCAGDTDSAQALGALELDEEDLALCTFVCPGKYEYGTLLRECLDTIEKEG.

Belongs to the NqrA family. In terms of assembly, composed of six subunits; NqrA, NqrB, NqrC, NqrD, NqrE and NqrF.

The catalysed reaction is a ubiquinone + n Na(+)(in) + NADH + H(+) = a ubiquinol + n Na(+)(out) + NAD(+). This reaction is tightly coupled to the Na(+) pumping activity and specifically requires Na(+) for activity. Inhibited by korormicin and 2-N-heptyl-4-hydroxyquinoline N-oxide (HQNO). In terms of biological role, NQR complex catalyzes the reduction of ubiquinone-1 to ubiquinol by two successive reactions, coupled with the transport of Na(+) ions from the cytoplasm to the periplasm. NqrA to NqrE are probably involved in the second step, the conversion of ubisemiquinone to ubiquinol. In Vibrio alginolyticus, this protein is Na(+)-translocating NADH-quinone reductase subunit A.